The primary structure comprises 486 residues: Zinc transporter 6 (486 aa).

Topologically, residues 1-60 are cytoplasmic; the sequence is MVALDVLGITDSDAPVYRQKQEADTLVLGTIHPFRKAHRSVLGKLAQEFRLVTSDRRSWK. A helical transmembrane segment spans residues 61 to 81; sequence ILLFGVLNVVCTGCLLMWCSS. Over 82–91 the chain is Extracellular; sequence TNSMALTAYT. Residues 92 to 112 form a helical membrane-spanning segment; that stretch reads YLTIFDLFSLITCLLSLWVTM. The Cytoplasmic segment spans residues 113-125; sequence KKPSQIYSFGFQR. Residues 126-146 traverse the membrane as a helical segment; the sequence is FEVLAVFSSTVLVQLGSLFIL. Topologically, residues 147–161 are extracellular; it reads KESVERFVEQPEVHT. Residues 162-182 traverse the membrane as a helical segment; the sequence is GRLLVGTFVALFFNLLTLLSV. Residues 183–227 are Cytoplasmic-facing; sequence KNKPFVFVSEAASTSWLQEHVADLSRSLCGLIPALSSFLLPRMNP. Residues 228–248 form a helical membrane-spanning segment; sequence FVLINLAGAFALGITYMLIEI. The Extracellular portion of the chain corresponds to 249-255; that stretch reads NNYNAMD. A helical transmembrane segment spans residues 256-276; the sequence is TASAVAIALMTFGTMYPMSVY. Topologically, residues 277–486 are cytoplasmic; that stretch reads SGKVLLQTTP…SGTYTGPPRP (210 aa). Over residues 394–411 the composition is skewed to low complexity; the sequence is PSRAQGSEPTPATSTPAK. A disordered region spans residues 394–425; the sequence is PSRAQGSEPTPATSTPAKPSSPPPEFSFHTPG.

The protein belongs to the cation diffusion facilitator (CDF) transporter (TC 2.A.4) family. SLC30A subfamily. In terms of assembly, heterodimer with SLC30A5; form a functional zinc ion transmembrane transporter.

The protein resides in the golgi apparatus. The protein localises to the trans-Golgi network membrane. Its function is as follows. Has probably no intrinsic transporter activity but together with SLC30A5 forms a functional zinc ion:proton antiporter heterodimer, mediating zinc entry into the lumen of organelles along the secretory pathway. As part of that zinc ion:proton antiporter, contributes to zinc ion homeostasis within the early secretory pathway and regulates the activation and folding of enzymes like alkaline phosphatases and enzymes involved in phosphatidylinositol glycan anchor biosynthesis. The polypeptide is Zinc transporter 6 (slc30a6) (Danio rerio (Zebrafish)).